The primary structure comprises 462 residues: Cysteine--tRNA ligase (462 aa).

Cysteine 24 contacts Zn(2+). The 'HIGH' region signature appears at 26-36; the sequence is PTVYDDAHLGH. Zn(2+)-binding residues include cysteine 199, histidine 224, and glutamate 228. A 'KMSKS' region motif is present at residues 256–260; sequence KMSKS. Residue lysine 259 participates in ATP binding.

This sequence belongs to the class-I aminoacyl-tRNA synthetase family. In terms of assembly, monomer. Zn(2+) is required as a cofactor.

The protein resides in the cytoplasm. The catalysed reaction is tRNA(Cys) + L-cysteine + ATP = L-cysteinyl-tRNA(Cys) + AMP + diphosphate. This Campylobacter jejuni subsp. jejuni serotype O:2 (strain ATCC 700819 / NCTC 11168) protein is Cysteine--tRNA ligase (cysS).